The following is a 65-amino-acid chain: Large ribosomal subunit protein bL35 (65 aa).

The protein belongs to the bacterial ribosomal protein bL35 family.

This is Large ribosomal subunit protein bL35 from Prochlorococcus marinus (strain MIT 9313).